The chain runs to 168 residues: MVIPNLHNSIPICGKCDPKLTNSFIGIVLFLAVLIIGILILILFYYNKEINKNSSQYLPIHSPGSGNPSPSSSFLINNNNNNNNYHQNNNSNNNNIIYNPYYNSSTTSPYYLSPNSNHNPSLILYHQSRLLGNIHSINSINNNNNNNNNNPPTNISNKLNKNGETKNI.

A helical membrane pass occupies residues 24–44 (FIGIVLFLAVLIIGILILILF). Disordered regions lie at residues 69-92 (SPSSSFLINNNNNNNNYHQNNNSN) and 142-168 (NNNNNNNNNPPTNISNKLNKNGETKNI). The span at 142–157 (NNNNNNNNNPPTNISN) shows a compositional bias: low complexity.

The protein resides in the membrane. This is an uncharacterized protein from Dictyostelium discoideum (Social amoeba).